The chain runs to 533 residues: Tyrosine decarboxylase (533 aa).

The interval 1–22 (MAPPSHCHTINGGAPRNGAIPE) is disordered. Pyridoxal 5'-phosphate contacts are provided by Thr281 and Asn336. An N6-(pyridoxal phosphate)lysine modification is found at Lys339.

Belongs to the group II decarboxylase family. Pyridoxal 5'-phosphate serves as cofactor.

It catalyses the reaction L-tyrosine + H(+) = tyramine + CO2. Its function is as follows. Catalyzes the decarboxylation of L-tyrosine to tyramine, which can be converted to the hydroxycinnamic acid amides feruloyltyramine and 4-coumaroyltyramine. Possesses low tryptophan decarboxylase activity. The sequence is that of Tyrosine decarboxylase from Oryza sativa subsp. japonica (Rice).